Reading from the N-terminus, the 218-residue chain is Cytidylate kinase (218 aa).

11–19 (GPSGVGKST) is a binding site for ATP.

The protein belongs to the cytidylate kinase family. Type 1 subfamily.

Its subcellular location is the cytoplasm. It carries out the reaction CMP + ATP = CDP + ADP. The catalysed reaction is dCMP + ATP = dCDP + ADP. The polypeptide is Cytidylate kinase (Mycoplasmopsis synoviae (strain 53) (Mycoplasma synoviae)).